A 285-amino-acid polypeptide reads, in one-letter code: Bifunctional protein FolD (285 aa).

NADP(+) contacts are provided by residues 165-167 (GRS) and Ser190.

It belongs to the tetrahydrofolate dehydrogenase/cyclohydrolase family. As to quaternary structure, homodimer.

The enzyme catalyses (6R)-5,10-methylene-5,6,7,8-tetrahydrofolate + NADP(+) = (6R)-5,10-methenyltetrahydrofolate + NADPH. It catalyses the reaction (6R)-5,10-methenyltetrahydrofolate + H2O = (6R)-10-formyltetrahydrofolate + H(+). It participates in one-carbon metabolism; tetrahydrofolate interconversion. In terms of biological role, catalyzes the oxidation of 5,10-methylenetetrahydrofolate to 5,10-methenyltetrahydrofolate and then the hydrolysis of 5,10-methenyltetrahydrofolate to 10-formyltetrahydrofolate. The chain is Bifunctional protein FolD from Burkholderia pseudomallei (strain 1710b).